Here is a 163-residue protein sequence, read N- to C-terminus: Ureidoglycolate lyase (163 aa).

Belongs to the ureidoglycolate lyase family. Homodimer. The cofactor is Ni(2+).

It carries out the reaction (S)-ureidoglycolate = urea + glyoxylate. It participates in nitrogen metabolism; (S)-allantoin degradation. Its function is as follows. Catalyzes the catabolism of the allantoin degradation intermediate (S)-ureidoglycolate, generating urea and glyoxylate. Involved in the utilization of allantoin as nitrogen source. This Mesorhizobium japonicum (strain LMG 29417 / CECT 9101 / MAFF 303099) (Mesorhizobium loti (strain MAFF 303099)) protein is Ureidoglycolate lyase.